The sequence spans 425 residues: Serine--tRNA ligase (425 aa).

Residues 108–134 (YPNLPSEACPDGRSEDDNKEVRRWGDP) form a disordered region. The span at 117 to 134 (PDGRSEDDNKEVRRWGDP) shows a compositional bias: basic and acidic residues. An L-serine-binding site is contributed by 233 to 235 (TAE). 264-266 (RRE) contributes to the ATP binding site. Glutamate 287 is an L-serine binding site. 351–354 (EISS) is an ATP binding site. Serine 385 contributes to the L-serine binding site.

The protein belongs to the class-II aminoacyl-tRNA synthetase family. Type-1 seryl-tRNA synthetase subfamily. In terms of assembly, homodimer. The tRNA molecule binds across the dimer.

It is found in the cytoplasm. The enzyme catalyses tRNA(Ser) + L-serine + ATP = L-seryl-tRNA(Ser) + AMP + diphosphate + H(+). It carries out the reaction tRNA(Sec) + L-serine + ATP = L-seryl-tRNA(Sec) + AMP + diphosphate + H(+). It functions in the pathway aminoacyl-tRNA biosynthesis; selenocysteinyl-tRNA(Sec) biosynthesis; L-seryl-tRNA(Sec) from L-serine and tRNA(Sec): step 1/1. Functionally, catalyzes the attachment of serine to tRNA(Ser). Is also able to aminoacylate tRNA(Sec) with serine, to form the misacylated tRNA L-seryl-tRNA(Sec), which will be further converted into selenocysteinyl-tRNA(Sec). The protein is Serine--tRNA ligase of Synechococcus sp. (strain CC9311).